The sequence spans 785 residues: Ubiquitin carboxyl-terminal hydrolase 10 (785 aa).

Polar residues-rich tracts occupy residues 113–122 (LTLDSGSNAE) and 262–277 (DTTESLGVTNGQTLES). Disordered regions lie at residues 113 to 145 (LTLDSGSNAENDGLSGGLGQRERKKKKKRPPGY) and 262 to 314 (DTTE…ATAT). Basic and acidic residues predominate over residues 290–304 (HTVESTDSDQAKPEE). A compositionally biased stretch (low complexity) spans 305 to 314 (ASPTTEATAT). One can recognise a USP domain in the interval 401–782 (RGLINKGNWC…TAYLLYYRRV (382 aa)). Catalysis depends on Cys410, which acts as the Nucleophile. Residues 537 to 581 (EKLSVSNGPEVQTVREEEEQDEQGEGSEDEWEQVGPRNKSSVTRQ) form a disordered region. Over residues 552–568 (EEEEQDEQGEGSEDEWE) the composition is skewed to acidic residues. His736 (proton acceptor) is an active-site residue.

This sequence belongs to the peptidase C19 family. USP10 subfamily.

It is found in the cytoplasm. The protein localises to the nucleus. It carries out the reaction Thiol-dependent hydrolysis of ester, thioester, amide, peptide and isopeptide bonds formed by the C-terminal Gly of ubiquitin (a 76-residue protein attached to proteins as an intracellular targeting signal).. Its function is as follows. Hydrolase that can remove conjugated ubiquitin from target proteins such as p53/TP53, RPS2/us5, RPS3/us3, RPS10/eS10, BECN1, SNX3 and CFTR. Acts as an essential regulator of p53/TP53 stability: in unstressed cells, specifically deubiquitinates p53/TP53 in the cytoplasm, leading to counteracts MDM2 action and stabilize p53/TP53. Following DNA damage, translocates to the nucleus and deubiquitinates p53/TP53, leading to regulate the p53/TP53-dependent DNA damage response. Component of a regulatory loop that controls autophagy and p53/TP53 levels. Plays a key role in 40S ribosome subunit recycling when a ribosome has stalled during translation: acts both by inhibiting formation of stress granules, which store stalled translation pre-initiation complexes, and mediating deubiquitination of 40S ribosome subunits. Deubiquitinates CFTR in early endosomes, enhancing its endocytic recycling. The chain is Ubiquitin carboxyl-terminal hydrolase 10 (USP10) from Gallus gallus (Chicken).